Here is a 315-residue protein sequence, read N- to C-terminus: D-alanine--D-alanine ligase (315 aa).

An ATP-grasp domain is found at 101–297 (KHIFRSLNID…FNELVKIIIE (197 aa)). 128-181 (KIDYPYVLKPINEGSSIGVYIIFSHEDYLELKNNSSTIMEKMIVEEYIPGIELH) provides a ligand contact to ATP. Mg(2+) contacts are provided by D249, E263, and N265.

The protein belongs to the D-alanine--D-alanine ligase family. Mg(2+) serves as cofactor. Requires Mn(2+) as cofactor.

It localises to the cytoplasm. The enzyme catalyses 2 D-alanine + ATP = D-alanyl-D-alanine + ADP + phosphate + H(+). It participates in cell wall biogenesis; peptidoglycan biosynthesis. Its function is as follows. Cell wall formation. In Wolbachia pipientis wMel, this protein is D-alanine--D-alanine ligase.